Consider the following 328-residue polypeptide: UDP-N-acetylglucosamine transporter YEA4 (328 aa).

10 helical membrane-spanning segments follow: residues 1-21, 30-50, 66-86, 98-118, 122-142, 166-186, 198-218, 241-261, 274-294, and 298-318; these read MSFVLILSLVFGGCCSNVISF, INLGNIVTFTQFVSVTLIQLP, HIPLKIHMLAVFLFFTSSVAN, IHIIIRCSGTTLTMIIGWAVC, YSKLQVQSAIIMTLGAIVASL, SMFGIFVVLVATALMSLLSLL, WKETLFYSHFLALPLFMLGYT, LPIATKLFMLIANNVTQFICI, LTLSVVLLVRKFVSLLLSVYI, and VLSVTAYLGTITVFLGAGLYS.

The protein belongs to the nucleotide-sugar transporter family. SLC35A subfamily.

It is found in the golgi apparatus membrane. Sugar transporter that specifically mediates the transport of UDP-N-acetylglucosamine (UDP-GlcNAc) from the cytosol into Golgi vesicles where glycosyltransferases function. The sequence is that of UDP-N-acetylglucosamine transporter YEA4 (YEA4) from Kluyveromyces lactis (strain ATCC 8585 / CBS 2359 / DSM 70799 / NBRC 1267 / NRRL Y-1140 / WM37) (Yeast).